We begin with the raw amino-acid sequence, 518 residues long: MAIYSQVPWTLPRYKFEVKVHPLAATSNLQPDDGYKIELRAENTVDKYPAKQHARRVAAQIRQGLGLIFLMGQKSTLHEDSDQERSLRQRRYFFYLSGVDEADCDLTYDIKTDKLTLYVPDFDLRRAIWMGPTLERKAALRKFDVDEVNYHSALDEDVKKWAKNQDTGSTIYLLHGSQGPAENPPNVTIDSKALKLAMDACRVIKDEHEIQLIRRANDISAAAHLEILRGIKSMSNESHIEGSFLNTSVSLGAHKQAYQIIAASGSNAATLHYSKNNEPLKGRQFVCLDAGAEWNCYASDVTRTFPITHQWPSIEAKQIYQLVQEMQESCIALVKEGVRYLDLHFLAHSILIKGFLTLGIFKGGTLDEVKKSGASLLFFPHGLGHHIGLEVHDVSPQSIMAQGINDDSNNILILPTCVSPCTTSSPALISGMVITIEPGIYFSQLALDNAKPEQLKYIDMARVKNYMAVGGVRIEDDILVTKTGYENLTKVPKGDDMLEIIRQGKKGNDSPCVDRPTW.

Mn(2+) contacts are provided by Asp289, Asp300, Glu437, and Glu475.

Belongs to the peptidase M24B family. Requires Mn(2+) as cofactor.

It carries out the reaction Release of any N-terminal amino acid, including proline, that is linked to proline, even from a dipeptide or tripeptide.. Functionally, catalyzes the removal of a penultimate prolyl residue from the N-termini of peptides. This Ajellomyces capsulatus (strain H143) (Darling's disease fungus) protein is Probable Xaa-Pro aminopeptidase HCDG_07916.